Here is an 82-residue protein sequence, read N- to C-terminus: Delta-ctenitoxin-Pn1a (82 aa).

The N-terminal stretch at 1 to 16 is a signal peptide; it reads MKVAIVFLSLLVLAFA. The propeptide occupies 17–34; the sequence is SESIEENREEFPVEESAR. 5 disulfide bridges follow: Cys35-Cys49, Cys42-Cys55, Cys46-Cys82, Cys48-Cys65, and Cys57-Cys63.

Belongs to the neurotoxin 03 (Tx2) family. 05 subfamily. Expressed by the venom gland.

The protein localises to the secreted. This neurotoxin binds at site 3 of insect voltage-activated sodium channels (Nav) and prolongs evoked axonal action potentials by a slowing down of sodium current inactivation. The toxin also inhibits glutamate uptake from rat brain synaptosomes. It reversibly inhibits the N-methyl-D-aspartate (NMDA)-subtype of ionotropic glutamate receptor (GRIN). In addition, the toxin shows antinociceptive effect in all rat pain models tested (inflammatory, neuropathic and nociceptive). The antinociceptive effect is partially blocked when selective antagonists of both mu- and delta-opioid receptors are administered, revealing that the antinociceptive effect of the toxin involves both opioid and cannabinoid endogenous systems. In vivo, it is highly toxic to house fly (Musca domestica), toxic to cockroach, but has no effect when intracerebroventricularly injected into mice. The polypeptide is Delta-ctenitoxin-Pn1a (Phoneutria nigriventer (Brazilian armed spider)).